Reading from the N-terminus, the 319-residue chain is Formimidoylglutamase (319 aa).

6 residues coordinate Mn(2+): His-127, Asp-150, His-152, Asp-154, Asp-242, and Asp-244.

Belongs to the arginase family. Mn(2+) is required as a cofactor.

It carries out the reaction N-formimidoyl-L-glutamate + H2O = formamide + L-glutamate. Its pathway is amino-acid degradation; L-histidine degradation into L-glutamate; L-glutamate from N-formimidoyl-L-glutamate (hydrolase route): step 1/1. Functionally, catalyzes the conversion of N-formimidoyl-L-glutamate to L-glutamate and formamide. The sequence is that of Formimidoylglutamase from Halalkalibacterium halodurans (strain ATCC BAA-125 / DSM 18197 / FERM 7344 / JCM 9153 / C-125) (Bacillus halodurans).